Reading from the N-terminus, the 462-residue chain is Glycine--tRNA ligase (462 aa).

2 residues coordinate substrate: arginine 100 and glutamate 174. Residues 206–208, 216–221, 290–291, and 334–337 each bind ATP; these read RNE, FRTREF, EL, and GADR. 221–225 serves as a coordination point for substrate; sequence FEQME. Substrate is bound at residue 330–334; the sequence is EPSLG.

This sequence belongs to the class-II aminoacyl-tRNA synthetase family. In terms of assembly, homodimer.

Its subcellular location is the cytoplasm. The enzyme catalyses tRNA(Gly) + glycine + ATP = glycyl-tRNA(Gly) + AMP + diphosphate. Its function is as follows. Catalyzes the attachment of glycine to tRNA(Gly). The polypeptide is Glycine--tRNA ligase (Ruminiclostridium cellulolyticum (strain ATCC 35319 / DSM 5812 / JCM 6584 / H10) (Clostridium cellulolyticum)).